Here is a 305-residue protein sequence, read N- to C-terminus: Coiled-coil domain-containing protein 83 (305 aa).

A disordered region spans residues 1–25 (MDSSAKGSKKDAPDGPPKDSKLPVS). The segment covering 8-21 (SKKDAPDGPPKDSK) has biased composition (basic and acidic residues). Residues 37 to 186 (ENAVERFMFH…LEDEKKRISR (150 aa)) are a coiled coil.

The chain is Coiled-coil domain-containing protein 83 (Ccdc83) from Mus musculus (Mouse).